The following is a 77-amino-acid chain: Cell division topological specificity factor (77 aa).

The protein belongs to the MinE family.

In terms of biological role, prevents the cell division inhibition by proteins MinC and MinD at internal division sites while permitting inhibition at polar sites. This ensures cell division at the proper site by restricting the formation of a division septum at the midpoint of the long axis of the cell. The chain is Cell division topological specificity factor from Nautilia profundicola (strain ATCC BAA-1463 / DSM 18972 / AmH).